The following is a 543-amino-acid chain: Glutamyl-tRNA(Gln) amidotransferase subunit A, chloroplastic/mitochondrial (543 aa).

Active-site charge relay system residues include Lys-123 and Ser-198. Ser-222 serves as the catalytic Acyl-ester intermediate.

It belongs to the amidase family. GatA subfamily. As to quaternary structure, subunit of the heterotrimeric GatCAB amidotransferase (AdT) complex, composed of A, B and C subunits.

Its subcellular location is the mitochondrion. The protein localises to the plastid. It localises to the chloroplast stroma. It catalyses the reaction L-glutamyl-tRNA(Gln) + L-glutamine + ATP + H2O = L-glutaminyl-tRNA(Gln) + L-glutamate + ADP + phosphate + H(+). Its function is as follows. Allows the formation of correctly charged Gln-tRNA(Gln) through the transamidation of misacylated Glu-tRNA(Gln) in chloroplasts and mitochondria. The reaction takes place in the presence of glutamine and ATP through an activated gamma-phospho-Glu-tRNA(Gln). The chain is Glutamyl-tRNA(Gln) amidotransferase subunit A, chloroplastic/mitochondrial from Oryza sativa subsp. indica (Rice).